A 436-amino-acid polypeptide reads, in one-letter code: tRNA pseudouridine synthase Pus10 (436 aa).

D254 serves as the catalytic Nucleophile. Residues Y322 and Y394 each coordinate substrate.

This sequence belongs to the pseudouridine synthase Pus10 family.

The enzyme catalyses uridine(54) in tRNA = pseudouridine(54) in tRNA. The catalysed reaction is uridine(55) in tRNA = pseudouridine(55) in tRNA. Its function is as follows. Responsible for synthesis of pseudouridine from uracil-54 and uracil-55 in the psi GC loop of transfer RNAs. The sequence is that of tRNA pseudouridine synthase Pus10 from Methanopyrus kandleri (strain AV19 / DSM 6324 / JCM 9639 / NBRC 100938).